We begin with the raw amino-acid sequence, 554 residues long: Probable phospholipase D F09G2.8 (554 aa).

Over 1–123 (MPLRLINFRQ…GNSRNRIIKP (123 aa)) the chain is Cytoplasmic. A helical; Signal-anchor for type II membrane protein membrane pass occupies residues 124-144 (ACVPISIVSLFIIALVFLPLF). Over 145-554 (NEEDLASPIK…DWNSEYSKDL (410 aa)) the chain is Extracellular. 4 N-linked (GlcNAc...) asparagine glycosylation sites follow: Asn181, Asn208, Asn244, and Asn266. The region spanning 272–299 (GSGIIHTKFILSDIATLYIGSANMDWKS) is the PLD phosphodiesterase 1 domain. Catalysis depends on residues His277, Lys279, and Asp284. Asn333, Asn350, Asn468, and Asn513 each carry an N-linked (GlcNAc...) asparagine glycan. The 27-residue stretch at 492 to 518 (FTRVNHAKYMVTEDIAYIGTSNWSGDY) folds into the PLD phosphodiesterase 2 domain.

The protein belongs to the phospholipase D family.

The protein localises to the membrane. The catalysed reaction is a 1,2-diacyl-sn-glycero-3-phosphocholine + H2O = a 1,2-diacyl-sn-glycero-3-phosphate + choline + H(+). This chain is Probable phospholipase D F09G2.8, found in Caenorhabditis elegans.